Here is a 332-residue protein sequence, read N- to C-terminus: NADH-quinone oxidoreductase subunit H (332 aa).

The next 9 helical transmembrane spans lie at 4–24 (FAFF…IFAS), 44–64 (IGPD…MIKL), 78–98 (FIFA…LAAI), 120–140 (VALL…FLGG), 165–185 (VGAL…LVDI), 194–214 (FSWL…ALFI), 255–275 (IAGA…FWII), 279–299 (IMMI…RAAF), and 312–332 (YLIL…AVLL).

It belongs to the complex I subunit 1 family. As to quaternary structure, NDH-1 is composed of 14 different subunits. Subunits NuoA, H, J, K, L, M, N constitute the membrane sector of the complex.

Its subcellular location is the cell inner membrane. It carries out the reaction a quinone + NADH + 5 H(+)(in) = a quinol + NAD(+) + 4 H(+)(out). Its function is as follows. NDH-1 shuttles electrons from NADH, via FMN and iron-sulfur (Fe-S) centers, to quinones in the respiratory chain. The immediate electron acceptor for the enzyme in this species is believed to be ubiquinone. Couples the redox reaction to proton translocation (for every two electrons transferred, four hydrogen ions are translocated across the cytoplasmic membrane), and thus conserves the redox energy in a proton gradient. This subunit may bind ubiquinone. This chain is NADH-quinone oxidoreductase subunit H, found in Campylobacter jejuni (strain RM1221).